Reading from the N-terminus, the 912-residue chain is Brevican core protein (912 aa).

Residues 1 to 22 (MAPLFLPLLATLVLAWIPVALA) form the signal peptide. The Ig-like V-type domain maps to 36 to 155 (RVRIAGDAPL…SSDAVEVKVK (120 aa)). Disulfide bonds link Cys-57-Cys-137, Cys-179-Cys-250, Cys-203-Cys-224, Cys-277-Cys-352, and Cys-301-Cys-322. Asn-130 carries N-linked (GlcNAc...) asparagine glycosylation. Link domains are found at residues 157-252 (VVFL…YCYA) and 257-354 (GELF…YCFR). N-linked (GlcNAc...) asparagine glycosylation is present at Asn-337. Disordered regions lie at residues 408 to 427 (IPII…PAEA) and 438 to 651 (SIVP…SGDC). Ser-418 is subject to Phosphoserine. Residue Ser-418 is glycosylated (O-linked (Xyl...) (chondroitin sulfate) serine). A compositionally biased stretch (basic and acidic residues) spans 448 to 463 (EEGKVLEQEEKYRGEE). Residues 464–478 (EKEEEEEEEEVEDEA) show a composition bias toward acidic residues. Residues 520-537 (VSPPPYDEPEAPRPPRVL) are compositionally biased toward pro residues. Over residues 603 to 617 (GDTRDLETPSEENSR) the composition is skewed to basic and acidic residues. Residues 647 to 683 (SSGDCVPSPCHNGGTCLEEEEGVRCLCLPGYGGDLCD) form the EGF-like domain. Intrachain disulfides connect Cys-651–Cys-662, Cys-656–Cys-671, Cys-673–Cys-682, Cys-689–Cys-700, Cys-717–Cys-809, Cys-785–Cys-801, Cys-816–Cys-859, and Cys-845–Cys-872. The C-type lectin domain occupies 683 to 811 (DVGLHFCSPG…NYHLSYTCKM (129 aa)). In terms of domain architecture, Sushi spans 814 to 874 (VSCGPPPELP…WGLPQISCVP (61 aa)).

Belongs to the aggrecan/versican proteoglycan family. As to quaternary structure, interacts with TNR. Post-translationally, O-glycosylated; contains chondroitin sulfate. In terms of tissue distribution, brain; expressed in cerebellar astrocytes but not in neurons.

It localises to the secreted. The protein resides in the extracellular space. The protein localises to the extracellular matrix. May play a role in the terminally differentiating and the adult nervous system during postnatal development. Could stabilize interactions between hyaluronan (HA) and brain proteoglycans. The sequence is that of Brevican core protein (BCAN) from Bos taurus (Bovine).